The sequence spans 336 residues: Toluate 1,2-dioxygenase electron transfer component (336 aa).

One can recognise a 2Fe-2S ferredoxin-type domain in the interval 3-97 (HKVATDFEDG…DCVIRVPAAS (95 aa)). Cys-40, Cys-45, Cys-48, and Cys-81 together coordinate [2Fe-2S] cluster. Residues 99–336 (VCKTQQAGYQ…FYYEKFAASA (238 aa)) are ferredoxin-reductase. An FAD-binding FR-type domain is found at 104-204 (QAGYQAAISN…AGPLGAFYLR (101 aa)).

Belongs to the bacterial ring-hydroxylating dioxygenase ferredoxin reductase family. This dioxygenase system consists of three proteins: the two subunits of the hydroxylase component (XylX and XylY), and an electron transfer component (XylZ). The cofactor is FAD. [2Fe-2S] cluster serves as cofactor.

The catalysed reaction is 2 reduced [2Fe-2S]-[ferredoxin] + NAD(+) + H(+) = 2 oxidized [2Fe-2S]-[ferredoxin] + NADH. Electron transfer component of toluate 1,2-dioxygenase system. In Pseudomonas putida (Arthrobacter siderocapsulatus), this protein is Toluate 1,2-dioxygenase electron transfer component (xylZ).